Here is a 272-residue protein sequence, read N- to C-terminus: Phosphatidylglycerol--prolipoprotein diacylglyceryl transferase (272 aa).

Transmembrane regions (helical) follow at residues 16–36 (VGLH…LSSF), 62–82 (FALG…VLFY), 97–117 (IWKG…WAAV), and 129–149 (LSVT…ALLI). An a 1,2-diacyl-sn-glycero-3-phospho-(1'-sn-glycerol)-binding site is contributed by Arg150. A run of 2 helical transmembrane segments spans residues 206-226 (GVIR…VAVI) and 246-266 (ILTI…GIIW).

This sequence belongs to the Lgt family.

It localises to the cell inner membrane. The enzyme catalyses L-cysteinyl-[prolipoprotein] + a 1,2-diacyl-sn-glycero-3-phospho-(1'-sn-glycerol) = an S-1,2-diacyl-sn-glyceryl-L-cysteinyl-[prolipoprotein] + sn-glycerol 1-phosphate + H(+). It participates in protein modification; lipoprotein biosynthesis (diacylglyceryl transfer). Functionally, catalyzes the transfer of the diacylglyceryl group from phosphatidylglycerol to the sulfhydryl group of the N-terminal cysteine of a prolipoprotein, the first step in the formation of mature lipoproteins. This Chlamydia trachomatis serovar D (strain ATCC VR-885 / DSM 19411 / UW-3/Cx) protein is Phosphatidylglycerol--prolipoprotein diacylglyceryl transferase.